Here is a 307-residue protein sequence, read N- to C-terminus: UDP-3-O-acyl-N-acetylglucosamine deacetylase (307 aa).

The Zn(2+) site is built by His78, His241, and Asp245. The active-site Proton donor is the His268.

This sequence belongs to the LpxC family. Requires Zn(2+) as cofactor.

It carries out the reaction a UDP-3-O-[(3R)-3-hydroxyacyl]-N-acetyl-alpha-D-glucosamine + H2O = a UDP-3-O-[(3R)-3-hydroxyacyl]-alpha-D-glucosamine + acetate. The protein operates within glycolipid biosynthesis; lipid IV(A) biosynthesis; lipid IV(A) from (3R)-3-hydroxytetradecanoyl-[acyl-carrier-protein] and UDP-N-acetyl-alpha-D-glucosamine: step 2/6. Catalyzes the hydrolysis of UDP-3-O-myristoyl-N-acetylglucosamine to form UDP-3-O-myristoylglucosamine and acetate, the committed step in lipid A biosynthesis. The protein is UDP-3-O-acyl-N-acetylglucosamine deacetylase of Variovorax paradoxus (strain S110).